The primary structure comprises 479 residues: Endosomal/lysosomal proton channel TMEM175 (479 aa).

Residues 1–26 are disordered; sequence MSGPQAPEPTLEGQADASAGSPDEDA. The Cytoplasmic portion of the chain corresponds to 1–33; sequence MSGPQAPEPTLEGQADASAGSPDEDAAEGIQHS. The chain crosses the membrane as a helical span at residues 34-56; it reads HRMLSFSDALLSIIATVMEFDKS. The short motif at 35-41 is the RxxxFSD motif 1 element; the sequence is RMLSFSD. The interval 52–58 is short helix H2-1; it reads EFDKSVQ. The Lumenal portion of the chain corresponds to 57–64; that stretch reads VQRLLATR. Residues 65 to 87 form a helical membrane-spanning segment; it reads IAVYLMTFLIVTVAWAAHTRLFQ. Topologically, residues 88–93 are cytoplasmic; that stretch reads VVGKID. Residues 94 to 103 traverse the membrane as a helical segment; it reads DTLALLNLFS. Residues 104–113 lie on the Lumenal side of the membrane; the sequence is LMVTFPEVPL. The helical transmembrane segment at 114–135 threads the bilayer; it reads GIFLFCMCVIAIGAVQALIVLY. Topologically, residues 136–159 are cytoplasmic; sequence AFHFPHLLSPQIERSAHRGLYRQR. A helical transmembrane segment spans residues 160–180; it reads VLGIIVRGPALCLAAAGFSLF. The Lumenal segment spans residues 181-185; the sequence is FYPAS. The chain crosses the membrane as a helical span at residues 186–205; it reads YLLMAMVIVLPHVSKAAGWC. Residues 206–232 lie on the Cytoplasmic side of the membrane; sequence RAQLVGPREPPAHSVEVFTFDLHEPLS. A helical membrane pass occupies residues 233-257; it reads KERVEAFSDGVYAIVATLLILDICE. The RxxxFSD motif 2 signature appears at 235–241; the sequence is RVEAFSD. At 258–284 the chain is on the lumenal side; the sequence is DNVPDAKDVKEKFQGSLVAALGESGPH. Positions 263–271 are short helix H1-2; sequence AKDVKEKFQ. The short helix H2-2 stretch occupies residues 273–279; that stretch reads SLVAALG. The chain crosses the membrane as a helical span at residues 285–307; that stretch reads FLAYFGSFATVGLLWFAHHSLFL. Residues 308–313 are Cytoplasmic-facing; sequence HIRRAT. Residues 314-335 form a helical membrane-spanning segment; sequence QPMGLLNTLSLAFVGGLPLAYQ. Over 336-350 the chain is Lumenal; it reads QTSAFTKQPRDELES. Residues 351–371 form a helical membrane-spanning segment; that stretch reads VRISCAIIFLASIFQFAIWTT. At 372–391 the chain is on the cytoplasmic side; sequence ALLQEGETLQPSARFGGREH. The helical transmembrane segment at 392 to 415 threads the bilayer; it reads AFMFAKLALYPCASLLAFACTCVL. Over 416 to 417 the chain is Lumenal; that stretch reads SS. Residues 418-444 traverse the membrane as a helical segment; sequence FSTAIFHAMQIAVPFAFLLLRLLVRLA. Residues 445 to 479 lie on the Cytoplasmic side of the membrane; sequence LAGLRALRGLVGPVLARPAPGAADEAQSPLLPAPC.

Belongs to the TMEM175 family. Homodimer. Interacts with AKT (AKT1, AKT2 or AKT3); leading to formation of the lysoK(GF) complex, which activates the channel. Interacts with LAMP1; inhibiting the proton channel activity of TMEM175. Interacts with LAMP2; inhibiting the proton channel activity of TMEM175.

The protein resides in the endosome membrane. The protein localises to the lysosome membrane. The catalysed reaction is H(+)(in) = H(+)(out). It carries out the reaction K(+)(in) = K(+)(out). Its activity is regulated as follows. Active at low pH (under pH 4.6): proton channel activity is activated by luminal side protons. Polyunsaturated fatty acids, such as arachidonic acid, also activate the channel activity. Proton channel activity is directly inhibited by LAMP1 or LAMP2, facilitating lysosomal acidification. Channel activity is activated following interaction with AKT (AKT1, AKT2 or AKT3): interaction promotes activation from closed to an open state. Activation by AKT is independent of AKT serine/threonine-protein kinase activity. Functionally, proton-activated proton channel that catalyzes proton efflux from endosomes and lysosomes to maintain a steady-state pH. Activated at low pH (under pH 4.6) by luminal side protons: selectively mediates lysosomal proton release from lysosomes, eliciting a proton leak that balances V-ATPase activity to maintain pH homeostasis. Regulation of lumenal pH stability is required for autophagosome-lysosome fusion. Also acts as a potassium channel at higher pH, regulating potassium conductance in endosomes and lysosomes. Constitutes the pore-forming subunit of the lysoK(GF) complex, a complex activated by extracellular growth factors. The lysoK(GF) complex is composed of TMEM175 and AKT (AKT1, AKT2 or AKT3), a major target of growth factor receptors: in the complex, TMEM175 channel is opened by conformational changes by AKT, leading to its activation. The lysoK(GF) complex is required to protect neurons against stress-induced damage. In Bos taurus (Bovine), this protein is Endosomal/lysosomal proton channel TMEM175.